The sequence spans 657 residues: MKEKSKNAAKTRREKENGEFYELAKLLPLPSAITSQLDKASIIRLTTSYLKMRAVFPEGLGDAWGQPSRTGPLDSVAKELGSHLLQTLDGFVFVVASDGKIMYISETASVHLGLSQVELTGNSIYEYIHPSDHDEMTAVLTAHPPLHHHLLQEYEIERSFFLRMKCVLAKRNAGLTCSGYKVIHCSGYLKIRQYMLDMSLYDSCYQIVGLVAVGQSLPPSAITEIKLHSNMFMFRASLDLKLIFLDSRVTELTGYEPQDLIEKTLYHHVHGCDTFHLRYAHHLLLVKGQVTTKYYRLLSKLGGWVWVQSYATVVHNSRSSRPHCIVSVNYVLTDVEYKELQLSLDQVSTSKSQESWRTTLSTSQETRKSAKPKNTKMKTKLRTNPYPPQQYSSFQMDKLECSQVGNWRTSPPTNAVAPPEQQLHSEASDLLYGPPYSLPFSYHYGHFPLDSHVFSSKKPGLPAKFGQPQGSPCEVARFFLSTLPASSECQWHCANSLVPSSSSPAKNLSEPSPVNAARHGLVPNYEAPSAAARRFCEDPAPPSFPSCGHYREEPALGPAKAPRQASRDAARLALARAPPECCAPPAPEPQAPAQLPFVLLNYHRVLARRGPLGSAAPGAPEAAGSLRPRHPGPVAASAPGAPRPHYLGASVIITNGR.

The 53-residue stretch at 1–53 (MKEKSKNAAKTRREKENGEFYELAKLLPLPSAITSQLDKASIIRLTTSYLKMR) folds into the bHLH domain. 2 consecutive PAS domains span residues 77–147 (AKEL…PPLH) and 218–288 (PPSA…LVKG). The PAC domain maps to 218–288 (PPSAITEIKL…YAHHLLLVKG (71 aa)). In terms of domain architecture, Single-minded C-terminal spans 336-657 (EYKELQLSLD…GASVIITNGR (322 aa)). The span at 354–364 (ESWRTTLSTSQ) shows a compositional bias: polar residues. Disordered regions lie at residues 354-387 (ESWR…NPYP) and 612-641 (LGSA…APGA). The Nuclear localization signal motif lies at 367–386 (RKSAKPKNTKMKTKLRTNPY). Basic residues predominate over residues 369–381 (SAKPKNTKMKTKL).

As to quaternary structure, efficient DNA binding requires dimerization with another bHLH protein. Heterodimer of SIM2 and ARNT. In terms of tissue distribution, transcripts were detected in high levels in kidney followed by skeletal muscle and lung. Low levels were found in testis, brain and heart. In early fetal development it is found in CNS, developing kidney, tongue epithelium and cartilage primordia.

It is found in the nucleus. Transcription factor that may be a master gene of CNS development in cooperation with Arnt. It may have pleiotropic effects in the tissues expressed during development. This chain is Single-minded homolog 2 (Sim2), found in Mus musculus (Mouse).